The sequence spans 432 residues: Alcohol acyltransferase 9 (432 aa).

Active-site proton acceptor residues include His-156 and Asp-379.

It belongs to the plant acyltransferase family. As to expression, expressed in fruit.

It catalyses the reaction 2-(methylsulfanyl)acetyl-CoA + butan-1-ol = butyl 2-(methylsulfanyl)acetate + CoA. It carries out the reaction ethanol + acetyl-CoA = ethyl acetate + CoA. The enzyme catalyses butan-1-ol + acetyl-CoA = butyl acetate + CoA. The catalysed reaction is butan-1-ol + propanoyl-CoA = butyl propanoate + CoA. In terms of biological role, involved in the biosynthesis of volatile esters which confer kiwifruit flavor. Alcohol acyl transferase that can use a wide range of alcohols as substrate to produce esters. Exhibits acetyl-CoA:alcohol O-acyltransferase activity. This is Alcohol acyltransferase 9 from Actinidia eriantha (Velvet vine).